The chain runs to 109 residues: Antifungal protein ginkbilobin-like protein (109 aa).

Residues 4–109 (TNFVSSACNT…CFIQYEQHSF (106 aa)) form the Gnk2-homologous domain. Disulfide bonds link Cys11–Cys87, Cys63–Cys72, and Cys75–Cys100. An alpha-D-mannopyranose-binding site is contributed by Asn12. Positions 94 and 105 each coordinate alpha-D-mannopyranose.

Exerts antifungal activity through its carbohydrate-binding specificity. The sequence is that of Antifungal protein ginkbilobin-like protein from Picea abies (Norway spruce).